The primary structure comprises 129 residues: NADH-quinone oxidoreductase subunit A (129 aa).

3 helical membrane passes run 14-34, 67-87, and 95-115; these read LAIH…VAAW, FLIA…FAWA, and WLGL…LVYL.

Belongs to the complex I subunit 3 family. NDH-1 is composed of 14 different subunits. Subunits NuoA, H, J, K, L, M, N constitute the membrane sector of the complex.

The protein resides in the cell inner membrane. The catalysed reaction is a quinone + NADH + 5 H(+)(in) = a quinol + NAD(+) + 4 H(+)(out). Functionally, NDH-1 shuttles electrons from NADH, via FMN and iron-sulfur (Fe-S) centers, to quinones in the respiratory chain. The immediate electron acceptor for the enzyme in this species is believed to be ubiquinone. Couples the redox reaction to proton translocation (for every two electrons transferred, four hydrogen ions are translocated across the cytoplasmic membrane), and thus conserves the redox energy in a proton gradient. This chain is NADH-quinone oxidoreductase subunit A, found in Rhodopseudomonas palustris (strain ATCC BAA-98 / CGA009).